The chain runs to 213 residues: Protein-L-isoaspartate O-methyltransferase (213 aa).

Ser62 is an active-site residue.

It belongs to the methyltransferase superfamily. L-isoaspartyl/D-aspartyl protein methyltransferase family.

It is found in the cytoplasm. The catalysed reaction is [protein]-L-isoaspartate + S-adenosyl-L-methionine = [protein]-L-isoaspartate alpha-methyl ester + S-adenosyl-L-homocysteine. Catalyzes the methyl esterification of L-isoaspartyl residues in peptides and proteins that result from spontaneous decomposition of normal L-aspartyl and L-asparaginyl residues. It plays a role in the repair and/or degradation of damaged proteins. This is Protein-L-isoaspartate O-methyltransferase from Desulfovibrio desulfuricans (strain ATCC 27774 / DSM 6949 / MB).